Reading from the N-terminus, the 447-residue chain is N-succinylarginine dihydrolase (447 aa).

Residues 19–28, N110, and 137–138 contribute to the substrate site; these read AGLSFGNEAS and HR. E174 is a catalytic residue. Residue R213 coordinates substrate. Residue H249 is part of the active site. Substrate is bound by residues D251 and N364. C370 (nucleophile) is an active-site residue.

It belongs to the succinylarginine dihydrolase family. Homodimer.

The catalysed reaction is N(2)-succinyl-L-arginine + 2 H2O + 2 H(+) = N(2)-succinyl-L-ornithine + 2 NH4(+) + CO2. It functions in the pathway amino-acid degradation; L-arginine degradation via AST pathway; L-glutamate and succinate from L-arginine: step 2/5. Functionally, catalyzes the hydrolysis of N(2)-succinylarginine into N(2)-succinylornithine, ammonia and CO(2). This is N-succinylarginine dihydrolase from Yersinia pestis bv. Antiqua (strain Antiqua).